A 304-amino-acid polypeptide reads, in one-letter code: uncharacterized protein (304 aa).

Polar residues predominate over residues 226 to 244; that stretch reads SRNSESSRQSNLNSPNDSV. The tract at residues 226-263 is disordered; it reads SRNSESSRQSNLNSPNDSVKFNEFNKSNKSTKTNPNNI. A compositionally biased stretch (low complexity) spans 246–262; the sequence is FNEFNKSNKSTKTNPNN.

This is an uncharacterized protein from Acanthamoeba polyphaga (Amoeba).